We begin with the raw amino-acid sequence, 362 residues long: Cobalt-precorrin-5B C(1)-methyltransferase (362 aa).

This sequence belongs to the CbiD family.

It carries out the reaction Co-precorrin-5B + S-adenosyl-L-methionine = Co-precorrin-6A + S-adenosyl-L-homocysteine. The protein operates within cofactor biosynthesis; adenosylcobalamin biosynthesis; cob(II)yrinate a,c-diamide from sirohydrochlorin (anaerobic route): step 6/10. Functionally, catalyzes the methylation of C-1 in cobalt-precorrin-5B to form cobalt-precorrin-6A. The sequence is that of Cobalt-precorrin-5B C(1)-methyltransferase from Desulfotalea psychrophila (strain LSv54 / DSM 12343).